We begin with the raw amino-acid sequence, 1020 residues long: C protein alpha-antigen (1020 aa).

The first 41 residues, 1 to 41 (MFRRSKNNSYDTSQTKQRFSIKKFKFGAASVLIGLSFLGGV), serve as a signal peptide directing secretion. A 9 X 82 AA tandem repeats region spans residues 227-964 (VPDKDKYDPT…EVTVHVTPKP (738 aa)). Disordered regions lie at residues 261-281 (DGSK…VPGD), 306-330 (PKPV…GTPV), 342-363 (PDGS…VPGD), 388-445 (PKPV…VPGD), 470-494 (PKPV…GTPV), 506-527 (PDGS…VPGD), 552-576 (PKPV…GTPV), 588-610 (PDGS…PGDH), 634-658 (PKPV…GTPV), 670-692 (PDGS…PGDH), 716-740 (PKPV…GTPV), 752-774 (PDGS…PGDH), 798-822 (PKPV…GTPV), 834-856 (PDGS…PGDH), 880-904 (PKPV…GTPV), and 962-989 (PKPV…KLPA). Residues 272–281 (DRPDTNVPGD) show a composition bias toward basic and acidic residues. Polar residues predominate over residues 320–329 (GETTVPQGTP). A compositionally biased stretch (basic and acidic residues) spans 354-363 (DRPDTNVPGD). A compositionally biased stretch (polar residues) spans 402–411 (GETTVPQGTP). The span at 436 to 445 (DRPDTNVPGD) shows a compositional bias: basic and acidic residues. Over residues 484 to 493 (GETTVPQGTP) the composition is skewed to polar residues. The span at 518–527 (DRPDTNVPGD) shows a compositional bias: basic and acidic residues. The span at 566-575 (GETTVPQGTP) shows a compositional bias: polar residues. The span at 600–610 (DRPDTNVPGDH) shows a compositional bias: basic and acidic residues. The segment covering 648 to 657 (GETTVPQGTP) has biased composition (polar residues). Residues 682-692 (DRPDTNVPGDH) are compositionally biased toward basic and acidic residues. Residues 730 to 739 (GETTVPQGTP) are compositionally biased toward polar residues. The span at 764-774 (DRPDTNVPGDH) shows a compositional bias: basic and acidic residues. Positions 812-821 (GETTVPQGTP) are enriched in polar residues. Residues 846–856 (DRPDTNVPGDH) show a composition bias toward basic and acidic residues. Over residues 894–903 (GETTVPQGTP) the composition is skewed to polar residues. Residues 987–991 (LPATG) carry the LPXTG sorting signal motif. Residue Thr-990 is modified to Pentaglycyl murein peptidoglycan amidated threonine. Residues 991-1020 (GENATPFFNVAALTIISSVGLLSVSKKKED) constitute a propeptide, removed by sortase.

The protein resides in the secreted. It localises to the cell wall. Functionally, may play a role in both virulence and immunity. This is C protein alpha-antigen (bca) from Streptococcus agalactiae serotype Ia (strain ATCC 27591 / A909 / CDC SS700).